The sequence spans 130 residues: uncharacterized protein (130 aa).

Residues methionine 1–alanine 34 form a disordered region.

It to M.tuberculosis Rv1583c.

This is an uncharacterized protein from Mycobacterium tuberculosis (strain CDC 1551 / Oshkosh).